The following is an 887-amino-acid chain: MLSRLFRMHGLFVASHPWEVIVGTVTLTICMMSMNMFTGNNKICGWNYECPKFEEDVLSSDIIILTITRCIAILYIYFQFQNLRQLGSKYILGIAGLFTIFSSFVFSTVVIHFLDKELTGLNEALPFFLLLIDLSRASALAKFALSSNSQDEVRENIARGMAILGPTFTLDALVECLVIGVGTMSGVRQLEIMCCFGCMSVLANYFVFMTFFPACVSLVLELSRESREGRPIWQLSHFARVLEEEENKPNPVTQRVKMIMSLGLVLVHAHSRWIADPSPQNSTAEQAKVSLGLDEDVSKRIEPSVSLWQFYLSKMISMDIEQVITLSLAFLLAVKYIFFEQAETESTLSLKNPITSPVVTSKKAQDNCCRREPLLVRRNQKLSSVEEDPGANQERKVEVIKPLVVEAETTSRATFVLGASVASPPSALGTQEPGIELPIEPRPNEECLQILENAEKGAKFLSDAEIIQLVNAKHIPAYKLETLMETHERGVSIRRQLLSTKLAEPSSLQYLPYRDYNYSLVMGACCENVIGYMPIPVGVAGPLCLDGKEYQVPMATTEGCLVASTNRGCRAISLGGGASSRVLADGMTRGPVVRLPRACDSAEVKTWLETPEGFAVIKEAFDSTSRFARLQKLHVTMAGRNLYIRFQSRTGDAMGMNMISKGTEKALLKLQEFFPDMQILAVSGNYCTDKKPAAINWIEGRGKTVVCEAVIPAKVVREVLKTTTEAMVDVNINKNLVGSAMAGSIGGYNAHAANIVTAIYIACGQDAAQNVGSSNCITLMEASGPTNEDLYISCTMPSIEIGTVGGGTNLLPQQACLQMLGVQGACKDNPGENARQLARIVCGTVMAGELSLMAALAAGHLVRSHMVHNRSKINLQDLQGTCTKKAA.

The Cytoplasmic portion of the chain corresponds to 1-9; that stretch reads MLSRLFRMH. Residues 10-39 form a helical membrane-spanning segment; sequence GLFVASHPWEVIVGTVTLTICMMSMNMFTG. Residues 40–56 are Lumenal-facing; sequence NNKICGWNYECPKFEED. The chain crosses the membrane as a helical span at residues 57-78; that stretch reads VLSSDIIILTITRCIAILYIYF. Positions 61–218 constitute an SSD domain; that stretch reads DIIILTITRC…MTFFPACVSL (158 aa). The INSIG-binding motif signature appears at 75-78; sequence YIYF. Residues 79-89 lie on the Cytoplasmic side of the membrane; it reads QFQNLRQLGSK. A Glycyl lysine isopeptide (Lys-Gly) (interchain with G-Cter in ubiquitin) cross-link involves residue Lys-89. A helical membrane pass occupies residues 90–114; sequence YILGIAGLFTIFSSFVFSTVVIHFL. Topologically, residues 115 to 123 are lumenal; it reads DKELTGLNE. A helical membrane pass occupies residues 124–149; sequence ALPFFLLLIDLSRASALAKFALSSNS. Topologically, residues 150-159 are cytoplasmic; it reads QDEVRENIAR. Residues 160–187 form a helical membrane-spanning segment; the sequence is GMAILGPTFTLDALVECLVIGVGTMSGV. The Lumenal segment spans residues 188–191; it reads RQLE. The helical transmembrane segment at 192 to 220 threads the bilayer; that stretch reads IMCCFGCMSVLANYFVFMTFFPACVSLVL. Over 221 to 248 the chain is Cytoplasmic; that stretch reads ELSRESREGRPIWQLSHFARVLEEEENK. Lys-248 is covalently cross-linked (Glycyl lysine isopeptide (Lys-Gly) (interchain with G-Cter in ubiquitin)). A helical transmembrane segment spans residues 249–275; sequence PNPVTQRVKMIMSLGLVLVHAHSRWIA. Residues 276 to 314 lie on the Lumenal side of the membrane; it reads DPSPQNSTAEQAKVSLGLDEDVSKRIEPSVSLWQFYLSK. A glycan (N-linked (GlcNAc...) asparagine) is linked at Asn-281. A helical transmembrane segment spans residues 315-339; that stretch reads MISMDIEQVITLSLAFLLAVKYIFF. The Cytoplasmic segment spans residues 340-887; the sequence is EQAETESTLS…LQGTCTKKAA (548 aa). Residues Glu-558, Lys-690, and Asp-766 each act as charge relay system in the active site. The active-site Proton donor is His-865. Residue Ser-871 is modified to Phosphoserine.

This sequence belongs to the HMG-CoA reductase family. In terms of assembly, homotetramer. Homodimer. Interacts (via its SSD) with INSIG1; the interaction, accelerated by sterols, leads to the recruitment of HMGCR to AMFR/gp78 for its ubiquitination by the sterol-mediated ERAD pathway. Interacts with UBIAD1. In terms of processing, undergoes sterol-mediated ubiquitination and ER-associated degradation (ERAD). Accumulation of sterols in the endoplasmic reticulum (ER) membrane, triggers binding of the reductase to the ER membrane protein INSIG1 or INSIG2. The INSIG1 binding leads to the recruitment of the ubiquitin ligase, AMFR/gp78, RNF139 or RNF145, initiating ubiquitination of the reductase. The ubiquitinated reductase is then extracted from the ER membrane and delivered to cytosolic 26S proteosomes by a mechanism probably mediated by the ATPase Valosin-containing protein VCP/p97. The INSIG2-binding leads to the recruitment of the ubiquitin ligase RNF139, initiating ubiquitination of the reductase. Lys-248 is the main site of ubiquitination. Ubiquitination is enhanced by the presence of a geranylgeranylated protein. Post-translationally, N-glycosylated. Deglycosylated by NGLY1 on release from the endoplasmic reticulum (ER) in a sterol-mediated manner. Phosphorylated. Phosphorylation at Ser-871 reduces the catalytic activity.

The protein resides in the endoplasmic reticulum membrane. The protein localises to the peroxisome membrane. It carries out the reaction (R)-mevalonate + 2 NADP(+) + CoA = (3S)-3-hydroxy-3-methylglutaryl-CoA + 2 NADPH + 2 H(+). It participates in metabolic intermediate biosynthesis; (R)-mevalonate biosynthesis; (R)-mevalonate from acetyl-CoA: step 3/3. With respect to regulation, regulated by a negative feedback mechanism through sterols and non-sterol metabolites derived from mevalonate. Phosphorylation at Ser-871 down-regulates the catalytic activity. Its function is as follows. Catalyzes the conversion of (3S)-hydroxy-3-methylglutaryl-CoA (HMG-CoA) to mevalonic acid, the rate-limiting step in the synthesis of cholesterol and other isoprenoids, thus plays a critical role in cellular cholesterol homeostasis. This chain is 3-hydroxy-3-methylglutaryl-coenzyme A reductase (Hmgcr), found in Mus musculus (Mouse).